The following is a 91-amino-acid chain: Elongation factor 1-beta (91 aa).

This sequence belongs to the EF-1-beta/EF-1-delta family.

Promotes the exchange of GDP for GTP in EF-1-alpha/GDP, thus allowing the regeneration of EF-1-alpha/GTP that could then be used to form the ternary complex EF-1-alpha/GTP/AAtRNA. This chain is Elongation factor 1-beta, found in Sulfurisphaera tokodaii (strain DSM 16993 / JCM 10545 / NBRC 100140 / 7) (Sulfolobus tokodaii).